The primary structure comprises 284 residues: RNase adapter protein RapZ (284 aa).

Residue 8–15 (GRSGSGKS) participates in ATP binding. 56 to 59 (DVRN) is a binding site for GTP. Residues 266-284 (RSRGKNVQSRHRTLEKRKP) form an RNA-binding region.

It belongs to the RapZ-like family. RapZ subfamily. Homotrimer.

Functionally, modulates the synthesis of GlmS, by affecting the processing and stability of the regulatory small RNA GlmZ. When glucosamine-6-phosphate (GlcN6P) concentrations are high in the cell, RapZ binds GlmZ and targets it to cleavage by RNase E. Consequently, GlmZ is inactivated and unable to activate GlmS synthesis. Under low GlcN6P concentrations, RapZ is sequestered and inactivated by an other regulatory small RNA, GlmY, preventing GlmZ degradation and leading to synthesis of GlmS. The protein is RNase adapter protein RapZ of Shigella boydii serotype 18 (strain CDC 3083-94 / BS512).